A 245-amino-acid polypeptide reads, in one-letter code: Chlorophyll a-b binding protein 1B-21, chloroplastic (245 aa).

Residues 1 to 44 (MASSSGLRSCSAVGVPSLLAPSSRSGRSGLPFCAYATTSGRVTM) constitute a chloroplast transit peptide. W48 is a binding site for chlorophyll b. Chlorophyll a is bound by residues F68, E87, and H90. R92 is a chlorophyll b binding site. The helical transmembrane segment at 93–113 (WAMLCVPGVLVPEALGLGNWV) threads the bilayer. L129 serves as a coordination point for chlorophyll a. A helical membrane pass occupies residues 132-152 (PVPWGNLPTILAIEFLAIAFA). Chlorophyll b contacts are provided by V133, E153, and R156. K190, E191, N194, R196, Q208, and H224 together coordinate chlorophyll a.

This sequence belongs to the light-harvesting chlorophyll a/b-binding (LHC) protein family. In terms of assembly, the LHC complex consists of chlorophyll a-b binding proteins. Binds at least 14 chlorophylls (8 Chl-a and 6 Chl-b) and carotenoids such as lutein and neoxanthin. is required as a cofactor. Post-translationally, photoregulated by reversible phosphorylation of its threonine residues.

Its subcellular location is the plastid. The protein resides in the chloroplast thylakoid membrane. In terms of biological role, the light-harvesting complex (LHC) functions as a light receptor, it captures and delivers excitation energy to photosystems with which it is closely associated. The protein is Chlorophyll a-b binding protein 1B-21, chloroplastic (LHC Ib-21) of Hordeum vulgare (Barley).